The sequence spans 204 residues: High frequency lysogenization protein HflD homolog (204 aa).

Belongs to the HflD family.

It localises to the cytoplasm. It is found in the cell inner membrane. The chain is High frequency lysogenization protein HflD homolog from Shewanella amazonensis (strain ATCC BAA-1098 / SB2B).